The primary structure comprises 478 residues: 3-isopropylmalate dehydratase large subunit (478 aa).

[4Fe-4S] cluster-binding residues include Cys-355, Cys-415, and Cys-418.

This sequence belongs to the aconitase/IPM isomerase family. LeuC type 1 subfamily. As to quaternary structure, heterodimer of LeuC and LeuD. The cofactor is [4Fe-4S] cluster.

The enzyme catalyses (2R,3S)-3-isopropylmalate = (2S)-2-isopropylmalate. The protein operates within amino-acid biosynthesis; L-leucine biosynthesis; L-leucine from 3-methyl-2-oxobutanoate: step 2/4. Its function is as follows. Catalyzes the isomerization between 2-isopropylmalate and 3-isopropylmalate, via the formation of 2-isopropylmaleate. The polypeptide is 3-isopropylmalate dehydratase large subunit (Paracoccus denitrificans (strain Pd 1222)).